The sequence spans 474 residues: Methylenetetrahydrofolate--tRNA-(uracil-5-)-methyltransferase TrmFO (474 aa).

FAD is bound at residue 9-14 (GGGLAG). The disordered stretch occupies residues 425-451 (PPLERMPRNETGKRLRGPEKAALKKRA). Residues 429–451 (RMPRNETGKRLRGPEKAALKKRA) are compositionally biased toward basic and acidic residues.

Belongs to the MnmG family. TrmFO subfamily. It depends on FAD as a cofactor.

The protein localises to the cytoplasm. It carries out the reaction uridine(54) in tRNA + (6R)-5,10-methylene-5,6,7,8-tetrahydrofolate + NADH + H(+) = 5-methyluridine(54) in tRNA + (6S)-5,6,7,8-tetrahydrofolate + NAD(+). It catalyses the reaction uridine(54) in tRNA + (6R)-5,10-methylene-5,6,7,8-tetrahydrofolate + NADPH + H(+) = 5-methyluridine(54) in tRNA + (6S)-5,6,7,8-tetrahydrofolate + NADP(+). In terms of biological role, catalyzes the folate-dependent formation of 5-methyl-uridine at position 54 (M-5-U54) in all tRNAs. This is Methylenetetrahydrofolate--tRNA-(uracil-5-)-methyltransferase TrmFO from Methylorubrum populi (strain ATCC BAA-705 / NCIMB 13946 / BJ001) (Methylobacterium populi).